We begin with the raw amino-acid sequence, 119 residues long: Large ribosomal subunit protein bL20 (119 aa).

Belongs to the bacterial ribosomal protein bL20 family.

In terms of biological role, binds directly to 23S ribosomal RNA and is necessary for the in vitro assembly process of the 50S ribosomal subunit. It is not involved in the protein synthesizing functions of that subunit. The polypeptide is Large ribosomal subunit protein bL20 (Streptococcus pneumoniae serotype 2 (strain D39 / NCTC 7466)).